The sequence spans 350 residues: Nicotinate-nucleotide--dimethylbenzimidazole phosphoribosyltransferase (350 aa).

The active-site Proton acceptor is the Glu-316.

This sequence belongs to the CobT family.

The catalysed reaction is 5,6-dimethylbenzimidazole + nicotinate beta-D-ribonucleotide = alpha-ribazole 5'-phosphate + nicotinate + H(+). The protein operates within nucleoside biosynthesis; alpha-ribazole biosynthesis; alpha-ribazole from 5,6-dimethylbenzimidazole: step 1/2. Catalyzes the synthesis of alpha-ribazole-5'-phosphate from nicotinate mononucleotide (NAMN) and 5,6-dimethylbenzimidazole (DMB). In Bradyrhizobium diazoefficiens (strain JCM 10833 / BCRC 13528 / IAM 13628 / NBRC 14792 / USDA 110), this protein is Nicotinate-nucleotide--dimethylbenzimidazole phosphoribosyltransferase.